Consider the following 128-residue polypeptide: Con-Ins F2 (128 aa).

Positions 1–24 (MTTSSYFLLVALGLLLYVCRSSFG) are cleaved as a signal peptide. Cystine bridges form between C29-C104, C41-C107, C53-C120, and C106-C111. The propeptide at 59–89 (LQGGTGKKRGRASLLRKRRAFLSMLKARAKR) is c peptide. E115 is modified (4-carboxyglutamate; partial). S127 carries the serine amide modification.

Belongs to the insulin family. As to quaternary structure, heterodimer of A and B chains; disulfide-linked. In terms of tissue distribution, expressed by the venom gland.

The protein localises to the secreted. In terms of biological role, this venom insulin facilitates prey capture by rapidly inducing hypoglycemic shock. Intraperitoneal injection of this peptide into zebrafish lowers blood glucose with the same potency than human insulin. In vivo, when applied to water, this peptide reduces overall locomotor activity of zebrafish larvae, observed as a significant decrease in the percentage of time spent swimming and movement frequency. The protein is Con-Ins F2 of Conus floridulus (Cone snail).